The primary structure comprises 443 residues: 3-isopropylmalate dehydratase large subunit (443 aa).

Positions 347, 407, and 410 each coordinate [4Fe-4S] cluster.

It belongs to the aconitase/IPM isomerase family. LeuC type 1 subfamily. In terms of assembly, heterodimer of LeuC and LeuD. [4Fe-4S] cluster serves as cofactor.

The catalysed reaction is (2R,3S)-3-isopropylmalate = (2S)-2-isopropylmalate. Its pathway is amino-acid biosynthesis; L-leucine biosynthesis; L-leucine from 3-methyl-2-oxobutanoate: step 2/4. Functionally, catalyzes the isomerization between 2-isopropylmalate and 3-isopropylmalate, via the formation of 2-isopropylmaleate. The protein is 3-isopropylmalate dehydratase large subunit of Buchnera aphidicola subsp. Uroleucon sonchi.